The primary structure comprises 262 residues: 4-hydroxy-2-oxo-heptane-1,7-dioate aldolase (262 aa).

Catalysis depends on His45, which acts as the Proton acceptor. Gln147 lines the substrate pocket. Position 149 (Glu149) interacts with a divalent metal cation. Substrate contacts are provided by Ala174 and Asp175. Residue Asp175 coordinates a divalent metal cation.

This sequence belongs to the HpcH/HpaI aldolase family. Homohexamer; trimer of dimers. Requires a divalent metal cation as cofactor.

The enzyme catalyses 4-hydroxy-2-oxoheptanedioate = succinate semialdehyde + pyruvate. The protein operates within aromatic compound metabolism; 4-hydroxyphenylacetate degradation; pyruvate and succinate semialdehyde from 4-hydroxyphenylacetate: step 7/7. Functionally, catalyzes the reversible retro-aldol cleavage of 4-hydroxy-2-ketoheptane-1,7-dioate (HKHD) to pyruvate and succinic semialdehyde. The sequence is that of 4-hydroxy-2-oxo-heptane-1,7-dioate aldolase from Shigella sonnei (strain Ss046).